Here is a 145-residue protein sequence, read N- to C-terminus: D-aminoacyl-tRNA deacylase (145 aa).

Residues 137–138 (GP) carry the Gly-cisPro motif, important for rejection of L-amino acids motif.

Belongs to the DTD family. As to quaternary structure, homodimer.

The protein localises to the cytoplasm. It carries out the reaction glycyl-tRNA(Ala) + H2O = tRNA(Ala) + glycine + H(+). It catalyses the reaction a D-aminoacyl-tRNA + H2O = a tRNA + a D-alpha-amino acid + H(+). Functionally, an aminoacyl-tRNA editing enzyme that deacylates mischarged D-aminoacyl-tRNAs. Also deacylates mischarged glycyl-tRNA(Ala), protecting cells against glycine mischarging by AlaRS. Acts via tRNA-based rather than protein-based catalysis; rejects L-amino acids rather than detecting D-amino acids in the active site. By recycling D-aminoacyl-tRNA to D-amino acids and free tRNA molecules, this enzyme counteracts the toxicity associated with the formation of D-aminoacyl-tRNA entities in vivo and helps enforce protein L-homochirality. The chain is D-aminoacyl-tRNA deacylase from Serratia proteamaculans (strain 568).